We begin with the raw amino-acid sequence, 241 residues long: Probable transcriptional regulatory protein H16_A0916 (241 aa).

This sequence belongs to the TACO1 family.

It localises to the cytoplasm. The sequence is that of Probable transcriptional regulatory protein H16_A0916 from Cupriavidus necator (strain ATCC 17699 / DSM 428 / KCTC 22496 / NCIMB 10442 / H16 / Stanier 337) (Ralstonia eutropha).